Consider the following 143-residue polypeptide: Transcriptional regulator MraZ (143 aa).

SpoVT-AbrB domains follow at residues 5-47 (EYRH…PQVE) and 76-119 (ATEC…SKEL).

It belongs to the MraZ family. As to quaternary structure, forms oligomers.

Its subcellular location is the cytoplasm. The protein localises to the nucleoid. This chain is Transcriptional regulator MraZ, found in Halalkalibacterium halodurans (strain ATCC BAA-125 / DSM 18197 / FERM 7344 / JCM 9153 / C-125) (Bacillus halodurans).